The following is a 333-amino-acid chain: MSDNPTIAPKIVVVGAGAFGTALAAVAAASANANVTLLSRREEVAEECRRTGRNERALPGIALPAGLGFSSEAAALAGADIVLFAMPSQEHRAAAQQYGTAIGADATIVTCAKGMEQSTGRLLTELLAEELPGHRIGVLSGPGFAADIAKGLPTAMVVAAPDMAVATELAEALSGPTFRLYPSTDRIGVQLGGALKNVLAIACGIVEGAGLGDSARAALISRGLAEMSRFIAARGGEADTVRGLSGLGDLVLTATSHQSRNLRFGIALGKNGRADGRGAELVEGAFAASVAARVAGDLGIEMPITEAVAAIIDGKLDVRTALEQLMSRPITQE.

Phe19, Arg40, Arg41, and Lys113 together coordinate NADPH. Sn-glycerol 3-phosphate-binding residues include Lys113 and Gly141. Ala145 serves as a coordination point for NADPH. Sn-glycerol 3-phosphate contacts are provided by Lys196, Asp249, Ser259, Arg260, and Asn261. The Proton acceptor role is filled by Lys196. NADPH is bound at residue Arg260. Val282 and Glu283 together coordinate NADPH.

This sequence belongs to the NAD-dependent glycerol-3-phosphate dehydrogenase family.

The protein localises to the cytoplasm. The catalysed reaction is sn-glycerol 3-phosphate + NAD(+) = dihydroxyacetone phosphate + NADH + H(+). It carries out the reaction sn-glycerol 3-phosphate + NADP(+) = dihydroxyacetone phosphate + NADPH + H(+). It functions in the pathway membrane lipid metabolism; glycerophospholipid metabolism. Its function is as follows. Catalyzes the reduction of the glycolytic intermediate dihydroxyacetone phosphate (DHAP) to sn-glycerol 3-phosphate (G3P), the key precursor for phospholipid synthesis. The polypeptide is Glycerol-3-phosphate dehydrogenase [NAD(P)+] (Sinorhizobium fredii (strain NBRC 101917 / NGR234)).